The sequence spans 291 residues: Pirin (291 aa).

Residues His56, His58, His101, and Glu103 each contribute to the Fe cation site.

The protein belongs to the pirin family. May interact with NF1/CTF1. Interacts with BCL3. Identified in a complex comprised of PIR, BLC3, NFKB1 and target DNA. Fe cation is required as a cofactor.

Its subcellular location is the nucleus. The protein localises to the cytoplasm. It carries out the reaction quercetin + O2 = 2-(3,4-dihydroxybenzoyloxy)-4,6-dihydroxybenzoate + CO. It participates in flavonoid metabolism; quercetin degradation. In terms of biological role, transcriptional coregulator of NF-kappa-B which facilitates binding of NF-kappa-B proteins to target kappa-B genes in a redox-state-dependent manner. May be required for efficient terminal myeloid maturation of hematopoietic cells. Has quercetin 2,3-dioxygenase activity (in vitro). This chain is Pirin (Pir), found in Rattus norvegicus (Rat).